The chain runs to 289 residues: uncharacterized protein (289 aa).

The HTH tetR-type domain maps to 2 to 62; that stretch reads NEKKERIIKT…SACEYYIGMS (61 aa). A DNA-binding region (H-T-H motif) is located at residues 25–44; it reads TIQEIASECGISKGAFYLHF.

This is an uncharacterized protein from Bacillus subtilis (strain 168).